We begin with the raw amino-acid sequence, 668 residues long: Metastasis-associated protein MTA2 (668 aa).

In terms of domain architecture, BAH spans 1 to 144 (MAANMYRVGD…PVQKTLLADQ (144 aa)). Phosphoserine occurs at positions 52 and 54. An ELM2 domain is found at 145–256 (GEIRVGCKYQ…KAMSTLVPQG (112 aa)). Lysine 152 carries the N6-acetyllysine modification. In terms of domain architecture, SANT spans 263 to 315 (DEMEEWSASEAMLFEEALEKYGKDFNDIRQDFLPWKSLASIVQFYYMWKTTDR). The GATA-type; atypical zinc-finger motif lies at 367-394 (CESCHTTQSAQWYAWGPPNMQCRLCASC). Polar residues predominate over residues 409 to 419 (QLEGATRGTTE). Positions 409–437 (QLEGATRGTTEPHSRGHLSRPEAQSLSPY) are disordered. Residues serine 433 and serine 435 each carry the phosphoserine modification. Lysine 460 carries the post-translational modification N6-acetyllysine. Lysine 492 participates in a covalent cross-link: Glycyl lysine isopeptide (Lys-Gly) (interchain with G-Cter in SUMO2 and SUMO3); alternate. A Glycyl lysine isopeptide (Lys-Gly) (interchain with G-Cter in SUMO2); alternate cross-link involves residue lysine 492. Residue lysine 508 forms a Glycyl lysine isopeptide (Lys-Gly) (interchain with G-Cter in SUMO2) linkage. An N6-acetyllysine mark is found at lysine 522 and lysine 531. The residue at position 534 (threonine 534) is a Phosphothreonine. Position 548 is a phosphoserine (serine 548). Residues lysine 559 and lysine 595 each participate in a glycyl lysine isopeptide (Lys-Gly) (interchain with G-Cter in SUMO2) cross-link. Disordered regions lie at residues 580 to 599 (ASGI…LNPA) and 647 to 668 (PPVP…VLED).

Belongs to the metastasis-associated protein family. In terms of assembly, component of the nucleosome remodeling and deacetylase (NuRD) repressor complex, composed of core proteins MTA1, MTA2, MTA3, RBBP4, RBBP7, HDAC1, HDAC2, MBD2, MBD3, and peripherally associated proteins CDK2AP1, CDK2AP2, GATAD2A, GATAD2B, CHD3, CHD4 and CHD5. The exact stoichiometry of the NuRD complex is unknown, and some subunits such as MBD2 and MBD3, GATAD2A and GATAD2B, and CHD3, CHD4 and CHD5 define mutually exclusive NuRD complexes. Interacts with CHD3. Interacts with CHD4. Interacts with GATAD2A. Interacts with HDAC7. Interacts with MBD3. Interacts with p53/TP53. Interacts with MINT. Interacts with PIMREG. Interacts with NACC2. Interacts with ERCC6. Interacts with PWWP2B. Interacts with transcription factor BCL11A. Widely expressed.

Its subcellular location is the nucleus. In terms of biological role, may function as a transcriptional coregulator. Acts as a component of the histone deacetylase NuRD complex which participates in the remodeling of chromatin. This is Metastasis-associated protein MTA2 (MTA2) from Homo sapiens (Human).